The sequence spans 287 residues: Lycopene elongase/hydratase (287 aa).

Helical transmembrane passes span 15–35 (ISWV…AGEI), 37–57 (WLFW…MYGI), 97–117 (IPFL…WLTI), 137–157 (FIDA…GATI), 166–186 (MWIA…LGAV), 218–238 (LLAA…GIAI), and 265–285 (VFLW…IAIH).

The protein belongs to the UbiA prenyltransferase family.

It localises to the cell membrane. It catalyses the reaction all-trans-lycopene + dimethylallyl diphosphate + A + H2O = nonaflavuxanthin + AH2 + diphosphate. It carries out the reaction nonaflavuxanthin + dimethylallyl diphosphate + A + H2O = flavuxanthin + AH2 + diphosphate. It participates in carotenoid biosynthesis. Its function is as follows. Catalyzes the elongation of the C(40) carotenoid all-trans-lycopene to the acyclic C(50) carotenoid flavuxanthin during decaprenoxanthin biosynthesis. Acts as a bifunctional enzyme that catalyzes the elongation of lycopene by attaching a C(5) isoprene unit at C-2, as well as the hydroxylation of the new isoprene unit. The enzyme acts at both ends of the substrate, forming the C(50) carotenoid flavuxanthin via the C(45) intermediate nonaflavuxanthin. The chain is Lycopene elongase/hydratase from Corynebacterium glutamicum (Brevibacterium saccharolyticum).